The sequence spans 361 residues: UDP-N-acetylglucosamine--N-acetylmuramyl-(pentapeptide) pyrophosphoryl-undecaprenol N-acetylglucosamine transferase (361 aa).

Residues 13 to 15 (TGG), N125, R167, S196, I251, 270 to 275 (ALTVTE), and Q296 each bind UDP-N-acetyl-alpha-D-glucosamine.

The protein belongs to the glycosyltransferase 28 family. MurG subfamily.

The protein resides in the cell inner membrane. The enzyme catalyses di-trans,octa-cis-undecaprenyl diphospho-N-acetyl-alpha-D-muramoyl-L-alanyl-D-glutamyl-meso-2,6-diaminopimeloyl-D-alanyl-D-alanine + UDP-N-acetyl-alpha-D-glucosamine = di-trans,octa-cis-undecaprenyl diphospho-[N-acetyl-alpha-D-glucosaminyl-(1-&gt;4)]-N-acetyl-alpha-D-muramoyl-L-alanyl-D-glutamyl-meso-2,6-diaminopimeloyl-D-alanyl-D-alanine + UDP + H(+). It participates in cell wall biogenesis; peptidoglycan biosynthesis. In terms of biological role, cell wall formation. Catalyzes the transfer of a GlcNAc subunit on undecaprenyl-pyrophosphoryl-MurNAc-pentapeptide (lipid intermediate I) to form undecaprenyl-pyrophosphoryl-MurNAc-(pentapeptide)GlcNAc (lipid intermediate II). The polypeptide is UDP-N-acetylglucosamine--N-acetylmuramyl-(pentapeptide) pyrophosphoryl-undecaprenol N-acetylglucosamine transferase (Psychrobacter arcticus (strain DSM 17307 / VKM B-2377 / 273-4)).